The chain runs to 617 residues: Dihydroxy-acid dehydratase (617 aa).

D81 is a binding site for Mg(2+). C122 provides a ligand contact to [2Fe-2S] cluster. The Mg(2+) site is built by D123 and K124. Residue K124 is modified to N6-carboxylysine. Position 197 (C197) interacts with [2Fe-2S] cluster. E494 contributes to the Mg(2+) binding site. The active-site Proton acceptor is S520.

This sequence belongs to the IlvD/Edd family. In terms of assembly, homodimer. [2Fe-2S] cluster is required as a cofactor. It depends on Mg(2+) as a cofactor.

The catalysed reaction is (2R)-2,3-dihydroxy-3-methylbutanoate = 3-methyl-2-oxobutanoate + H2O. The enzyme catalyses (2R,3R)-2,3-dihydroxy-3-methylpentanoate = (S)-3-methyl-2-oxopentanoate + H2O. It functions in the pathway amino-acid biosynthesis; L-isoleucine biosynthesis; L-isoleucine from 2-oxobutanoate: step 3/4. It participates in amino-acid biosynthesis; L-valine biosynthesis; L-valine from pyruvate: step 3/4. Functionally, functions in the biosynthesis of branched-chain amino acids. Catalyzes the dehydration of (2R,3R)-2,3-dihydroxy-3-methylpentanoate (2,3-dihydroxy-3-methylvalerate) into 2-oxo-3-methylpentanoate (2-oxo-3-methylvalerate) and of (2R)-2,3-dihydroxy-3-methylbutanoate (2,3-dihydroxyisovalerate) into 2-oxo-3-methylbutanoate (2-oxoisovalerate), the penultimate precursor to L-isoleucine and L-valine, respectively. This is Dihydroxy-acid dehydratase from Parafrankia sp. (strain EAN1pec).